Reading from the N-terminus, the 33-residue chain is MEALVYTFLLVSTLGILFFSIFFREPPKVPTQK.

A helical transmembrane segment spans residues 3–23 (ALVYTFLLVSTLGILFFSIFF).

It belongs to the PsbT family. As to quaternary structure, PSII is composed of 1 copy each of membrane proteins PsbA, PsbB, PsbC, PsbD, PsbE, PsbF, PsbH, PsbI, PsbJ, PsbK, PsbL, PsbM, PsbT, PsbY, PsbZ, Psb30/Ycf12, at least 3 peripheral proteins of the oxygen-evolving complex and a large number of cofactors. It forms dimeric complexes.

Its subcellular location is the plastid. The protein localises to the chloroplast thylakoid membrane. Found at the monomer-monomer interface of the photosystem II (PS II) dimer, plays a role in assembly and dimerization of PSII. PSII is a light-driven water plastoquinone oxidoreductase, using light energy to abstract electrons from H(2)O, generating a proton gradient subsequently used for ATP formation. This chain is Photosystem II reaction center protein T, found in Pelargonium hortorum (Common geranium).